Reading from the N-terminus, the 108-residue chain is Nucleoid-associated protein Bphyt_1827 (108 aa).

Positions 87-108 (AQEKMGGMTSGLPLPPGFKLPF) are disordered. The segment covering 99–108 (PLPPGFKLPF) has biased composition (pro residues).

The protein belongs to the YbaB/EbfC family. As to quaternary structure, homodimer.

The protein localises to the cytoplasm. Its subcellular location is the nucleoid. Its function is as follows. Binds to DNA and alters its conformation. May be involved in regulation of gene expression, nucleoid organization and DNA protection. The protein is Nucleoid-associated protein Bphyt_1827 of Paraburkholderia phytofirmans (strain DSM 17436 / LMG 22146 / PsJN) (Burkholderia phytofirmans).